Consider the following 95-residue polypeptide: uncharacterized protein (95 aa).

Residues 1-22 (MLPGFTMIITSLLLTFFREVEH) form the signal peptide. The Extracellular portion of the chain corresponds to 23–52 (LLPECLTITNTPQRTLVLIQRFTLLQKVMT). The chain crosses the membrane as a helical span at residues 53–69 (IHLLLSIGTLGSLFTLH). Residues 70–95 (PQLLKTNLLQKLHKELNSNLDYLISC) are Cytoplasmic-facing.

Its subcellular location is the host membrane. This is an uncharacterized protein from Acidianus bottle-shaped virus (isolate Italy/Pozzuoli) (ABV).